We begin with the raw amino-acid sequence, 340 residues long: Selenide, water dikinase (340 aa).

Cys13 is an active-site residue. ATP is bound by residues Lys16 and 43–45; that span reads ASD. Asp46 provides a ligand contact to Mg(2+). Residues Asp63, Asp86, and 133-135 contribute to the ATP site; that span reads GHS. Asp86 contacts Mg(2+). Asp221 lines the Mg(2+) pocket.

It belongs to the selenophosphate synthase 1 family. Class I subfamily. Homodimer. Mg(2+) is required as a cofactor.

It carries out the reaction hydrogenselenide + ATP + H2O = selenophosphate + AMP + phosphate + 2 H(+). In terms of biological role, synthesizes selenophosphate from selenide and ATP. The sequence is that of Selenide, water dikinase from Desulfitobacterium hafniense (strain DSM 10664 / DCB-2).